The primary structure comprises 1133 residues: Envelopment polyprotein (1133 aa).

The first 16 residues, Met1–Ala16, serve as a signal peptide directing secretion. The Lumenal portion of the chain corresponds to Leu17–Ala484. 10 disulfides stabilise this stretch: Cys61/Cys155, Cys107/Cys126, Cys131/Cys136, Cys173/Cys183, Cys208/Cys245, Cys232/Cys349, Cys374/Cys433, Cys378/Cys387, Cys403/Cys422, and Cys450/Cys473. An N-linked (GlcNAc...) asparagine; by host glycan is attached at Asn132. N-linked (GlcNAc...) asparagine; by host glycans are attached at residues Asn233 and Asn345. A glycan (N-linked (GlcNAc...) asparagine; by host) is linked at Asn397. Residues Leu485 to Leu504 form a helical membrane-spanning segment. The Cytoplasmic segment spans residues Leu505–Tyr626. The interval Leu514–Lys531 is binding to the ribonucleoprotein. 2 consecutive CCHC-type zinc fingers follow at residues Cys543 to Cys563 and Cys568 to Cys589. Binding to the ribonucleoprotein regions lie at residues Tyr586–Val603, Gln590–Lys601, and Gly609–Ser623. The 24-residue stretch at Gly609 to Thr632 folds into the ITAM domain. Positions Tyr613–Leu616 match the YxxL motif. A helical membrane pass occupies residues Ile627–Ala647. The Lumenal portion of the chain corresponds to Glu648–Val1105. 8 disulfide bridges follow: Cys733–Cys768, Cys737–Cys775, Cys749–Cys883, Cys763–Cys894, Cys778–Cys902, Cys804–Cys813, Cys821–Cys830, and Cys861–Cys865. The tract at residues Tyr755–Cys775 is fusion loop. N-linked (GlcNAc...) asparagine; by host glycosylation is present at Asn926. Disulfide bonds link Cys968–Cys998, Cys991–Cys1043, Cys1008–Cys1013, Cys1044–Cys1049, and Cys1083–Cys1087. Residues Val1106–Cys1125 form a helical membrane-spanning segment. The tract at residues Leu1120–Ser1133 is binding to the ribonucleoprotein. Residues Pro1126–Ser1133 lie on the Cytoplasmic side of the membrane.

It belongs to the hantavirus envelope glycoprotein family. Homodimer. Homotetramer; forms heterotetrameric Gn-Gc spikes in the pre-fusion conformation. Interacts (via C-terminus) with the nucleoprotein. Interacts with host TUFM; this interaction contributes to the virus-induced degradation of mitochondria by autophagy, which leads to degradation of host MAVS and inhibition of type I interferon (IFN) responses. Interacts with host MAP1LC3B; this interaction contributes to the virus-induced degradation of mitochondria by autophagy, which leads to degradation of host MAVS and inhibition of type I interferon (IFN) responses. As to quaternary structure, homodimer. Homotetramer; forms heterotetrameric Gn-Gc spikes in the pre-fusion conformation. Homotrimer; forms homotrimer in the post-fusion conformation at acidic pH. Interacts (via C-terminus) with the nucleoprotein. In terms of processing, envelope polyprotein precursor is quickly cleaved in vivo just after synthesis, presumably by host signal peptidase.

It is found in the virion membrane. Its subcellular location is the host cell surface. The protein resides in the host Golgi apparatus membrane. It localises to the host endoplasmic reticulum membrane. The protein localises to the host mitochondrion. In terms of biological role, forms homotetramers with glycoprotein C at the surface of the virion. Attaches the virion to host cell receptors including integrin ITGAV/ITGB3. This attachment induces virion internalization predominantly through clathrin-dependent endocytosis. Mediates the assembly and budding of infectious virus particles through its interaction with the nucleocapsid protein and the viral genome. May dysregulate normal immune and endothelial cell responses through an ITAM motif. Translocates to mitochondria, binds to host TUFM and recruits MAP1LC3B. These interactions induce mitochondrial autophagy and therefore destruction of host MAVS leading to inhibition of type I interferon (IFN) responses. Concomitant breakdown of glycoprotein N is apparently prevented by the nucleoprotein that may inhibit Gn-stimulated autophagosome-lysosome fusion. Interacts with the viral genomic RNA. Its function is as follows. Forms homotetramers with glycoprotein N at the surface of the virion. Attaches the virion to host cell receptors including integrin ITGAV/ITGB3. This attachment induces virion internalization predominantly through clathrin-dependent endocytosis. Class II fusion protein that promotes fusion of viral membrane with host endosomal membrane after endocytosis of the virion. The sequence is that of Envelopment polyprotein (GP) from Homo sapiens (Human).